The sequence spans 52 residues: Large ribosomal subunit protein bL32c (52 aa).

The protein belongs to the bacterial ribosomal protein bL32 family.

Its subcellular location is the plastid. The protein resides in the chloroplast. The protein is Large ribosomal subunit protein bL32c of Morus indica (Mulberry).